A 235-amino-acid chain; its full sequence is Ribonuclease PH (235 aa).

Phosphate-binding positions include Arg86 and 124 to 126 (GTR).

Belongs to the RNase PH family. As to quaternary structure, homohexameric ring arranged as a trimer of dimers.

It carries out the reaction tRNA(n+1) + phosphate = tRNA(n) + a ribonucleoside 5'-diphosphate. Its function is as follows. Phosphorolytic 3'-5' exoribonuclease that plays an important role in tRNA 3'-end maturation. Removes nucleotide residues following the 3'-CCA terminus of tRNAs; can also add nucleotides to the ends of RNA molecules by using nucleoside diphosphates as substrates, but this may not be physiologically important. Probably plays a role in initiation of 16S rRNA degradation (leading to ribosome degradation) during starvation. In Legionella pneumophila (strain Corby), this protein is Ribonuclease PH.